Reading from the N-terminus, the 706-residue chain is Zinc transporter foi (706 aa).

Positions 1–21 (MARHIMAVCVVCLLCAHRLHC) are cleaved as a signal peptide. The Extracellular portion of the chain corresponds to 22–261 (QDHIESLLGP…EKDKDIFYVW (240 aa)). Residues 40–56 (QDQLNARVYTNLSPSSE) show a composition bias toward polar residues. Residues 40 to 101 (QDQLNARVYT…HGPTSESRVP (62 aa)) are disordered. Residues N74, N119, N176, N182, N196, and N207 are each glycosylated (N-linked (GlcNAc...) asparagine). The helical transmembrane segment at 262–282 (IYAFISVFACGILGLVGVAII) threads the bilayer. At 283-292 (PFMGSRYYKY) the chain is on the cytoplasmic side. Residues 293-313 (IIQYLVALAVGTMTGDALLHL) form a helical membrane-spanning segment. Residues 314-329 (LPHSLAGQDERGMIMK) lie on the Extracellular side of the membrane. The chain crosses the membrane as a helical span at residues 330–350 (GLGCLGGIIFFYVMEHALTMI). Residues 351 to 604 (SEWRKSVEKK…LIKAGMSVKS (254 aa)) are Cytoplasmic-facing. Phosphoserine occurs at positions 376, 377, and 381. A helical transmembrane segment spans residues 605-625 (AVYYNLLTGVLSFIGMIFGIA). Residues 626–631 (FGQSQD) lie on the Extracellular side of the membrane. The chain crosses the membrane as a helical span at residues 632 to 652 (VAQWMFAVAAGLFIYIALVDM). The Cytoplasmic portion of the chain corresponds to 653–665 (MPEISASHKSLGQ). A helical transmembrane segment spans residues 666 to 686 (FLLQILGMLSGVGIMLLIALY). The Extracellular portion of the chain corresponds to 687–706 (EGDLMSAFGTAGAASHQHAH).

Belongs to the ZIP transporter (TC 2.A.5) family. In terms of processing, glycosylated. Maternal foi has almost completely disappeared by embryonic stage 3 except in the pole cells. In stage 6 embryos, expression is enriched in the invaginating mesoderm. In stage 9 embryos, high levels in the anterior and posterior midgut primordia. In stage 14 embryos, broad expression with low levels in the epidermis.

Its subcellular location is the cell membrane. Required for the normal migration of longitudinal and peripheral glial cells. During larval development, required for the migration of the subretinal glia into the eye disk. During embryonic development, also controls the migration of muscle cells toward their attachment sites. Required in the mesoderm for the correct morphogenesis of embryonic gonad and for tracheal branch fusion during tracheal development. Shg may be cooperating with foi to mediate a common mechanism for gonad and tracheal morphogenesis. Acts as a zinc transporter in both yeast and mammalian cells. The polypeptide is Zinc transporter foi (Drosophila melanogaster (Fruit fly)).